A 244-amino-acid polypeptide reads, in one-letter code: Phosphoadenosine 5'-phosphosulfate reductase (244 aa).

The active-site Nucleophile; cysteine thiosulfonate intermediate is Cys-239.

This sequence belongs to the PAPS reductase family. CysH subfamily.

Its subcellular location is the cytoplasm. It catalyses the reaction [thioredoxin]-disulfide + sulfite + adenosine 3',5'-bisphosphate + 2 H(+) = [thioredoxin]-dithiol + 3'-phosphoadenylyl sulfate. The protein operates within sulfur metabolism; hydrogen sulfide biosynthesis; sulfite from sulfate: step 3/3. Functionally, catalyzes the formation of sulfite from phosphoadenosine 5'-phosphosulfate (PAPS) using thioredoxin as an electron donor. The polypeptide is Phosphoadenosine 5'-phosphosulfate reductase (Cronobacter sakazakii (strain ATCC BAA-894) (Enterobacter sakazakii)).